We begin with the raw amino-acid sequence, 159 residues long: uncharacterized protein (159 aa).

Disordered stretches follow at residues 1 to 29 (MHQT…TSES) and 114 to 159 (TRGG…NENT). The segment covering 15 to 29 (SFSNESPTSRETSES) has biased composition (polar residues).

This is an uncharacterized protein from Homo sapiens (Human).